Reading from the N-terminus, the 284-residue chain is 2-dehydro-3-deoxyphosphooctonate aldolase (284 aa).

This sequence belongs to the KdsA family.

Its subcellular location is the cytoplasm. It catalyses the reaction D-arabinose 5-phosphate + phosphoenolpyruvate + H2O = 3-deoxy-alpha-D-manno-2-octulosonate-8-phosphate + phosphate. It functions in the pathway carbohydrate biosynthesis; 3-deoxy-D-manno-octulosonate biosynthesis; 3-deoxy-D-manno-octulosonate from D-ribulose 5-phosphate: step 2/3. The protein operates within bacterial outer membrane biogenesis; lipopolysaccharide biosynthesis. The protein is 2-dehydro-3-deoxyphosphooctonate aldolase of Photorhabdus laumondii subsp. laumondii (strain DSM 15139 / CIP 105565 / TT01) (Photorhabdus luminescens subsp. laumondii).